The following is a 452-amino-acid chain: UPF0761 membrane protein Bpet3042 (452 aa).

6 consecutive transmembrane segments (helical) span residues 56 to 76 (VLGIVPMLAVVLSLFTAFPVF), 114 to 134 (LTAIGGAFLVVTSLLLIMTID), 153 to 173 (ALVYWAVVTLGPVVAGASLWA), 195 to 215 (AISFLPLILTGLGFAALFVVV), 225 to 245 (ALVGGFGTAIVLELMKAAFAY), and 259 to 279 (AFATLPIFLLWIYLSWLAVLF).

The protein belongs to the UPF0761 family.

The protein localises to the cell inner membrane. The polypeptide is UPF0761 membrane protein Bpet3042 (Bordetella petrii (strain ATCC BAA-461 / DSM 12804 / CCUG 43448)).